The sequence spans 164 residues: Transcription elongation factor GreA (164 aa).

The stretch at 50–76 forms a coiled coil; sequence YHAAREEQGQQEARIRQLQELLNNAKV.

This sequence belongs to the GreA/GreB family.

Functionally, necessary for efficient RNA polymerase transcription elongation past template-encoded arresting sites. The arresting sites in DNA have the property of trapping a certain fraction of elongating RNA polymerases that pass through, resulting in locked ternary complexes. Cleavage of the nascent transcript by cleavage factors such as GreA or GreB allows the resumption of elongation from the new 3'terminus. GreA releases sequences of 2 to 3 nucleotides. This chain is Transcription elongation factor GreA, found in Mycolicibacterium smegmatis (strain ATCC 700084 / mc(2)155) (Mycobacterium smegmatis).